A 569-amino-acid chain; its full sequence is MEFKLNIPNTIIKTLQTIVFFLFVLLAFQIAEAEIHHHTFKIKSKAYTRLCNTNKILTVNGEFPGPTLKAYRGDKLIVNVINNANYNITLHWHGARQIRNPWSDGPEYVTQCPIRPGESYVYRIDLKVEEGTIWWHAHSQWARATVHGAFIVYPKRGSSYPFPKPHREIPLILGEWWKKENIMHIPGKANKTGGEPAISDSYTINGQPGYLYPCSKPETFKITVVRGRRYLLRIINAVMDEELFFAIANHTLTVVAKDGFYLKHFKSDYLMITPGQSMDVLLHANQRPNHYFVAARAYSSAFGAGFDKTTTTAILQYKGDTLNRIKPILPYLPPYNRTEASTRFTNQFRSQRPVNVPVKINTRLLYAISVNLMNCSDDRPCTGPFGKRFSSSINNISFVNPSVDILRAYYRHIGGVFQEDFPRNPPTKFNYTGENLPFPTRFGTKVVVLDYNSSVELILQGTTVWASNIHPIHLHGYNFYVVGSGFGNFDRRKDPLRYNLVDPPEETTVGVPRNGWTAVRFVANNPGVWLLHCHIERHATWGMNTVFIVKDGPTKSSRMVKPPPDLPSC.

Positions Met1–Ala33 are cleaved as a signal peptide. Plastocyanin-like domains lie at Lys41–Gly157 and Arg167–Asp320. An N-linked (GlcNAc...) asparagine glycan is attached at Asn87. Residues His91, His93, His136, and His138 each coordinate Cu cation. 7 N-linked (GlcNAc...) asparagine glycosylation sites follow: Asn190, Asn249, Asn336, Asn374, Asn395, Asn430, and Asn452. The region spanning Asp420–Pro553 is the Plastocyanin-like 3 domain. His470, His473, His475, His532, Cys533, His534, His538, and Met543 together coordinate Cu cation.

It belongs to the multicopper oxidase family. Requires Cu cation as cofactor. Expressed at low levels in flowers and siliques.

Its subcellular location is the secreted. It localises to the extracellular space. The protein localises to the apoplast. The catalysed reaction is 4 hydroquinone + O2 = 4 benzosemiquinone + 2 H2O. Its function is as follows. Lignin degradation and detoxification of lignin-derived products. This is Laccase-14 (LAC14) from Arabidopsis thaliana (Mouse-ear cress).